Consider the following 427-residue polypeptide: Tol-Pal system protein TolB (427 aa).

An N-terminal signal peptide occupies residues 1–27 (MPVSLLRALLVFSLLCLGLSATRAAHA).

The protein belongs to the TolB family. As to quaternary structure, the Tol-Pal system is composed of five core proteins: the inner membrane proteins TolA, TolQ and TolR, the periplasmic protein TolB and the outer membrane protein Pal. They form a network linking the inner and outer membranes and the peptidoglycan layer.

The protein localises to the periplasm. In terms of biological role, part of the Tol-Pal system, which plays a role in outer membrane invagination during cell division and is important for maintaining outer membrane integrity. The protein is Tol-Pal system protein TolB of Thiobacillus denitrificans (strain ATCC 25259 / T1).